The sequence spans 167 residues: NADH-ubiquinone oxidoreductase chain 6 (167 aa).

A run of 5 helical transmembrane segments spans residues 1–21, 23–43, 47–67, 86–106, and 133–153; these read MVLM…VASN, SPYF…GMLM, MTFL…VVFA, VFSY…AFVG, and AGGY…LVVL.

Belongs to the complex I subunit 6 family.

The protein localises to the mitochondrion membrane. It catalyses the reaction a ubiquinone + NADH + 5 H(+)(in) = a ubiquinol + NAD(+) + 4 H(+)(out). Functionally, core subunit of the mitochondrial membrane respiratory chain NADH dehydrogenase (Complex I) that is believed to belong to the minimal assembly required for catalysis. Complex I functions in the transfer of electrons from NADH to the respiratory chain. The immediate electron acceptor for the enzyme is believed to be ubiquinone. The polypeptide is NADH-ubiquinone oxidoreductase chain 6 (MT-ND6) (Polypterus ornatipinnis (Ornate bichir)).